The following is a 414-amino-acid chain: Phospholipid-transporting ATPase accessory subunit LEM3 (414 aa).

The required for localization to the plasma membrane stretch occupies residues 1-50; sequence MVNFDLGQVGEVFRRKDKGAIVSGDNPEEEEDVDASEFEEDEVKPVRTKN. Topologically, residues 1–74 are cytoplasmic; sequence MVNFDLGQVG…AINPVLTPRT (74 aa). The tract at residues 20-52 is disordered; the sequence is AIVSGDNPEEEEDVDASEFEEDEVKPVRTKNRR. A compositionally biased stretch (acidic residues) spans 26-42; that stretch reads NPEEEEDVDASEFEEDE. Residue S36 is modified to Phosphoserine. The chain crosses the membrane as a helical span at residues 75–95; it reads VLPLYLLIAVVFVIVGGCILA. At 96–372 the chain is on the extracellular side; that stretch reads QNSKVDEVTI…HGSHLGGRNP (277 aa). Cystine bridges form between C110/C159 and C216/C231. N-linked (GlcNAc...) asparagine glycosylation occurs at N113. N240, N256, N279, N298, and N332 each carry an N-linked (GlcNAc...) asparagine glycan. Residues 373–393 traverse the membrane as a helical segment; that stretch reads FLGIVYLIGGCICAAMALILL. The Cytoplasmic portion of the chain corresponds to 394–414; the sequence is TFWLFGGRKIADASSLSWNMK. A required for localization to the plasma membrane region spans residues 400-414; the sequence is GRKIADASSLSWNMK.

This sequence belongs to the CDC50/LEM3 family. In terms of assembly, component of a flippase complex consisting of DNF1 or DNF2 and LEM3. Interacts with DNF1; the interaction is direct and required for their mutual export from the endoplasmic reticulum. Interacts with DNF2; the interaction is direct and required for their mutual export from the endoplasmic reticulum.

It is found in the cell membrane. Its function is as follows. Accessory component of a P4-ATPase flippase complex which catalyzes the hydrolysis of ATP coupled to the transport of glucosylceramide, phosphatidylcholine, phosphatidylethanolamine, and small amounts of phosphatidylserine from the lumenal to the cytosolic leaflet of the cell membrane and ensures the maintenance of asymmetric distribution of phospholipids. Contributes to substrate binding and specificity of the P4-ATPase catalytic subunit. This chain is Phospholipid-transporting ATPase accessory subunit LEM3, found in Saccharomyces cerevisiae (strain ATCC 204508 / S288c) (Baker's yeast).